Consider the following 178-residue polypeptide: Stathmin-2-A (178 aa).

The region spanning aspartate 38 to glycine 178 is the SLD domain. Positions lysine 75 to glycine 178 form a coiled coil.

It belongs to the stathmin family. Nervous tissue.

The protein resides in the cytoplasm. Its subcellular location is the membrane. It is found in the cell projection. It localises to the lamellipodium. The sequence is that of Stathmin-2-A (stmn2-a) from Xenopus laevis (African clawed frog).